Here is a 397-residue protein sequence, read N- to C-terminus: Elongation factor Tu (397 aa).

The region spanning 10-207 is the tr-type G domain; sequence KPHCNIGTIG…AVDEYIPQPE (198 aa). The G1 stretch occupies residues 19 to 26; it reads GHVDHGKT. 19-26 serves as a coordination point for GTP; that stretch reads GHVDHGKT. Position 26 (Thr-26) interacts with Mg(2+). Residues 61-65 are G2; the sequence is GITIS. The interval 82–85 is G3; that stretch reads DCPG. Residues 82–86 and 137–140 each bind GTP; these read DCPGH and NKVD. Positions 137–140 are G4; it reads NKVD. The G5 stretch occupies residues 175 to 177; that stretch reads SAL.

The protein belongs to the TRAFAC class translation factor GTPase superfamily. Classic translation factor GTPase family. EF-Tu/EF-1A subfamily. Monomer.

Its subcellular location is the cytoplasm. The catalysed reaction is GTP + H2O = GDP + phosphate + H(+). Its function is as follows. GTP hydrolase that promotes the GTP-dependent binding of aminoacyl-tRNA to the A-site of ribosomes during protein biosynthesis. In Zymomonas mobilis subsp. mobilis (strain ATCC 31821 / ZM4 / CP4), this protein is Elongation factor Tu.